The primary structure comprises 563 residues: Arginine--tRNA ligase (563 aa).

Residues 121–131 (PNIAKPFSIGH) carry the 'HIGH' region motif.

This sequence belongs to the class-I aminoacyl-tRNA synthetase family. In terms of assembly, monomer.

The protein resides in the cytoplasm. It catalyses the reaction tRNA(Arg) + L-arginine + ATP = L-arginyl-tRNA(Arg) + AMP + diphosphate. The chain is Arginine--tRNA ligase from Streptococcus thermophilus (strain ATCC BAA-250 / LMG 18311).